The sequence spans 453 residues: Trigger factor (453 aa).

The PPIase FKBP-type domain occupies 171 to 256 (GDRVTISFKG…ASLIEAPQDI (86 aa)).

It belongs to the FKBP-type PPIase family. Tig subfamily.

The protein resides in the cytoplasm. It catalyses the reaction [protein]-peptidylproline (omega=180) = [protein]-peptidylproline (omega=0). Its function is as follows. Involved in protein export. Acts as a chaperone by maintaining the newly synthesized protein in an open conformation. Functions as a peptidyl-prolyl cis-trans isomerase. The sequence is that of Trigger factor from Nitrobacter hamburgensis (strain DSM 10229 / NCIMB 13809 / X14).